The primary structure comprises 230 residues: Geranylgeranylglyceryl phosphate synthase (230 aa).

K13 is a sn-glycerol 1-phosphate binding site. Mg(2+)-binding residues include D15 and T41. Sn-glycerol 1-phosphate is bound by residues 161–166, G191, and 211–212; these read YIEYSG and GN.

The protein belongs to the GGGP/HepGP synthase family. Group I subfamily. The cofactor is Mg(2+).

It localises to the cytoplasm. It catalyses the reaction sn-glycerol 1-phosphate + (2E,6E,10E)-geranylgeranyl diphosphate = sn-3-O-(geranylgeranyl)glycerol 1-phosphate + diphosphate. It participates in membrane lipid metabolism; glycerophospholipid metabolism. Functionally, prenyltransferase that catalyzes the transfer of the geranylgeranyl moiety of geranylgeranyl diphosphate (GGPP) to the C3 hydroxyl of sn-glycerol-1-phosphate (G1P). This reaction is the first ether-bond-formation step in the biosynthesis of archaeal membrane lipids. This is Geranylgeranylglyceryl phosphate synthase from Methanoculleus marisnigri (strain ATCC 35101 / DSM 1498 / JR1).